The following is a 312-amino-acid chain: Pyridoxal kinase (312 aa).

Methionine 1 carries the N-acetylmethionine modification. Pyridoxal 5'-phosphate contacts are provided by serine 12 and threonine 47. Pyridoxamine-binding residues include serine 12 and threonine 47. Residue serine 59 is modified to Phosphoserine. Position 113 (aspartate 113) interacts with K(+). Tyrosine 127 serves as a coordination point for pyridoxal 5'-phosphate. Threonine 148 contributes to the K(+) binding site. Position 150 (asparagine 150) interacts with ADP. Position 150 (asparagine 150) interacts with ATP. Residue serine 164 is modified to Phosphoserine. Threonine 186 is a binding site for K(+). 186–187 (TS) is a binding site for ADP. 186–187 (TS) is a binding site for ATP. Phosphoserine is present on serine 213. ADP is bound by residues 223–226 (MHKV) and 233–234 (TG). ATP-binding positions include 223-226 (MHKV) and 233-234 (TG). Residue 232-235 (GTGD) coordinates pyridoxal 5'-phosphate. Pyridoxamine is bound at residue aspartate 235. Aspartate 235 (proton acceptor) is an active-site residue. The residue at position 285 (serine 285) is a Phosphoserine.

Belongs to the pyridoxine kinase family. As to quaternary structure, homodimer. It depends on Zn(2+) as a cofactor. Mg(2+) serves as cofactor. As to expression, ubiquitous.

Its subcellular location is the cytoplasm. It is found in the cytosol. The enzyme catalyses pyridoxal + ATP = pyridoxal 5'-phosphate + ADP + H(+). It catalyses the reaction pyridoxamine + ATP = pyridoxamine 5'-phosphate + ADP + H(+). The catalysed reaction is pyridoxine + ATP = pyridoxine 5'-phosphate + ADP + H(+). It functions in the pathway cofactor metabolism; pyridoxal 5'-phosphate salvage; pyridoxal 5'-phosphate from pyridoxal: step 1/1. It participates in cofactor metabolism; pyridoxal 5'-phosphate salvage; pyridoxine 5'-phosphate from pyridoxine: step 1/1. The protein operates within cofactor metabolism; pyridoxal 5'-phosphate salvage; pyridoxamine 5'-phosphate from pyridoxamine: step 1/1. With respect to regulation, activated by K(+). Activity is increased in the presence of Na(+). Its function is as follows. Catalyzes the phosphorylation of the dietary vitamin B6 vitamers pyridoxal (PL), pyridoxine (PN) and pyridoxamine (PM) to form pyridoxal 5'-phosphate (PLP), pyridoxine 5'-phosphate (PNP) and pyridoxamine 5'-phosphate (PMP), respectively. PLP is the active form of vitamin B6, and acts as a cofactor for over 140 different enzymatic reactions. This chain is Pyridoxal kinase (PDXK), found in Ovis aries (Sheep).